Consider the following 512-residue polypeptide: Krueppel-like factor 11 (512 aa).

The interval 109 to 128 (PQSPDLVEPSTRTPVSPQVT) is disordered. Residues 118 to 128 (STRTPVSPQVT) show a composition bias toward polar residues. A Phosphoserine modification is found at Ser124. C2H2-type zinc fingers lie at residues 394–418 (YVCS…LRTH), 424–448 (FNCS…RRTH), and 454–476 (FVCP…ARRH).

Belongs to the Sp1 C2H2-type zinc-finger protein family. Interacts with SIN3A. As to expression, ubiquitous. Higher expression in erythroid cells.

The protein localises to the nucleus. Transcription factor. Activates the epsilon- and gamma-globin gene promoters and, to a much lower degree, the beta-globin gene and represses promoters containing SP1-like binding inhibiting cell growth. Represses transcription of SMAD7 which enhances TGF-beta signaling. Induces apoptosis. This chain is Krueppel-like factor 11 (KLF11), found in Homo sapiens (Human).